The following is a 904-amino-acid chain: MSRFFAGGSESDSDSSSDSEPIQRQTAPQFTFSDEEEDVKRVVRSTKEKRYEDLSNIIKSIRNYKKIKDMSSLLSSFEDLTRAYAKALPVITKEENGVCPRFIIRALAELEDFINEVWDDREGRKNLSKNNSKSLGALRQKFRKYIKDFDSDLKKFRESPDAADDEDEEEEKKEEEESDDEEAAVVPAAKAVSFKKDTVEKVKVEKDDDDSDDSIDWGQDSDSDESSSEEEAYGANIRERFLKRPEKEDGDDGEKKKEKKKTKETKDSRKKKRVEDDDDEGWESSATSEKPKMFAKDAEIDVALVVNKLNEVMAARGKKRTDRKLQIEFLRELRAISEEKKLGAAVAAKIRFNIVSAIFDYNPKVSEPMKLEHWSKLLEEIQALIKLLLANEDIVLSENILDENEEYDTAPYKIRGCMLTAVERLDDEFTKLLKECDPHSNEYVDRLKDEVTVTNVIEQVVQYVERLGNEMETCRIYLRKIDHLYYKFDPNVLKKRKAQLPASSLTSVDEMERLCRFIYAKDQTDRLRTRAILSHIFHHALHDNWFQARDLVLMSHLQETIHHSDPPTQILYNRTMANLGLCAFRHGNIKDAHQCLVDLMMTGKPKELLAQGLVPQRQNERSLEQEKVEKQRQMPFHMHINLELLECVYLVSAMLLEIPYMAAHEFDARRRMISKTFYQQLRSSERQSLVGPPESMREHVVAAAKAMRHGDWQACSNFIVNKKMNVKVWDLFYEADRVREMLAKFIKEEALRTYLFTYSNVYASISVPYLAEMFDLPKSKVHSLISKMIINEELMASLDDPTETVVLHRSEPSRLQALSMQLADKVTNLVDSNERVFEMKQGNFFQRGGNQGYNRDRQNYRNQNQNRENWNNNRRQDRGNRNRNQNRDREQREQHRVEFEEKAE.

2 disordered regions span residues 1–38 and 156–290; these read MSRFFAGGSESDSDSSSDSEPIQRQTAPQFTFSDEEED and FRES…TSEK. Positions 22-32 are enriched in polar residues; sequence IQRQTAPQFTF. Residues 161–183 are compositionally biased toward acidic residues; it reads DAADDEDEEEEKKEEEESDDEEA. Over residues 194 to 206 the composition is skewed to basic and acidic residues; sequence FKKDTVEKVKVEK. Residues 207–232 show a composition bias toward acidic residues; the sequence is DDDDSDDSIDWGQDSDSDESSSEEEA. Residues 237-247 are compositionally biased toward basic and acidic residues; sequence IRERFLKRPEK. Residues 257–272 show a composition bias toward basic residues; the sequence is KEKKKTKETKDSRKKK. The PCI domain maps to 636–812; the sequence is FHMHINLELL…ETVVLHRSEP (177 aa). Positions 847-904 are disordered; sequence RGGNQGYNRDRQNYRNQNQNRENWNNNRRQDRGNRNRNQNRDREQREQHRVEFEEKAE. Positions 860 to 873 are enriched in low complexity; sequence YRNQNQNRENWNNN. Over residues 874–904 the composition is skewed to basic and acidic residues; that stretch reads RRQDRGNRNRNQNRDREQREQHRVEFEEKAE.

This sequence belongs to the eIF-3 subunit C family. As to quaternary structure, component of the eukaryotic translation initiation factor 3 (eIF-3) complex.

The protein resides in the cytoplasm. Functionally, component of the eukaryotic translation initiation factor 3 (eIF-3) complex, which is involved in protein synthesis of a specialized repertoire of mRNAs and, together with other initiation factors, stimulates binding of mRNA and methionyl-tRNAi to the 40S ribosome. The eIF-3 complex specifically targets and initiates translation of a subset of mRNAs involved in cell proliferation. The sequence is that of Eukaryotic translation initiation factor 3 subunit C from Culex quinquefasciatus (Southern house mosquito).